The primary structure comprises 87 residues: Small ribosomal subunit protein bS20 (87 aa).

Residues 1–26 (MANIKSAKKRAIQSEKARKHNASRRS) form a disordered region.

It belongs to the bacterial ribosomal protein bS20 family.

Functionally, binds directly to 16S ribosomal RNA. The chain is Small ribosomal subunit protein bS20 from Escherichia coli O17:K52:H18 (strain UMN026 / ExPEC).